Here is a 529-residue protein sequence, read N- to C-terminus: GMP synthase [glutamine-hydrolyzing] (529 aa).

A Glutamine amidotransferase type-1 domain is found at 13–204 (PVLVVDFGAQ…LLETAGLEPT (192 aa)). Catalysis depends on Cys90, which acts as the Nucleophile. Residues His178 and Glu180 contribute to the active site. One can recognise a GMPS ATP-PPase domain in the interval 205–403 (WTAGNIAEQL…LGLPEEIVAR (199 aa)). 233–239 (SGGVDSA) is an ATP binding site.

As to quaternary structure, homodimer.

The enzyme catalyses XMP + L-glutamine + ATP + H2O = GMP + L-glutamate + AMP + diphosphate + 2 H(+). Its pathway is purine metabolism; GMP biosynthesis; GMP from XMP (L-Gln route): step 1/1. In terms of biological role, catalyzes the synthesis of GMP from XMP. The polypeptide is GMP synthase [glutamine-hydrolyzing] (Corynebacterium jeikeium (strain K411)).